The primary structure comprises 109 residues: T cell receptor alpha variable 27 (109 aa).

The N-terminal stretch at Met-1–Thr-19 is a signal peptide. The Ig-like domain occupies Gln-20–Gly-109. Residues Asn-36 and Asn-42 are each glycosylated (N-linked (GlcNAc...) asparagine). Cys-41 and Cys-107 are joined by a disulfide.

As to quaternary structure, alpha-beta TR is a heterodimer composed of an alpha and beta chain; disulfide-linked. The alpha-beta TR is associated with the transmembrane signaling CD3 coreceptor proteins to form the TR-CD3 (TcR or TCR). The assembly of alpha-beta TR heterodimers with CD3 occurs in the endoplasmic reticulum where a single alpha-beta TR heterodimer associates with one CD3D-CD3E heterodimer, one CD3G-CD3E heterodimer and one CD247 homodimer forming a stable octameric structure. CD3D-CD3E and CD3G-CD3E heterodimers preferentially associate with TR alpha and TR beta chains, respectively. The association of the CD247 homodimer is the last step of TcR assembly in the endoplasmic reticulum and is required for transport to the cell surface. (Microbial infection) Interacts with Staphylococcus aureus enterotoxin H/entH.

It is found in the cell membrane. In terms of biological role, v region of the variable domain of T cell receptor (TR) alpha chain that participates in the antigen recognition. Alpha-beta T cell receptors are antigen specific receptors which are essential to the immune response and are present on the cell surface of T lymphocytes. Recognize peptide-major histocompatibility (MH) (pMH) complexes that are displayed by antigen presenting cells (APC), a prerequisite for efficient T cell adaptive immunity against pathogens. Binding of alpha-beta TR to pMH complex initiates TR-CD3 clustering on the cell surface and intracellular activation of LCK that phosphorylates the ITAM motifs of CD3G, CD3D, CD3E and CD247 enabling the recruitment of ZAP70. In turn, ZAP70 phosphorylates LAT, which recruits numerous signaling molecules to form the LAT signalosome. The LAT signalosome propagates signal branching to three major signaling pathways, the calcium, the mitogen-activated protein kinase (MAPK) kinase and the nuclear factor NF-kappa-B (NF-kB) pathways, leading to the mobilization of transcription factors that are critical for gene expression and essential for T cell growth and differentiation. The T cell repertoire is generated in the thymus, by V-(D)-J rearrangement. This repertoire is then shaped by intrathymic selection events to generate a peripheral T cell pool of self-MH restricted, non-autoaggressive T cells. Post-thymic interaction of alpha-beta TR with the pMH complexes shapes TR structural and functional avidity. In Homo sapiens (Human), this protein is T cell receptor alpha variable 27.